A 202-amino-acid chain; its full sequence is Glycerol-3-phosphate acyltransferase (202 aa).

Transmembrane regions (helical) follow at residues Ile-2–Val-22, Lys-51–Ala-71, Val-80–Leu-100, Ile-116–Ala-136, Phe-137–Tyr-157, and Val-158–Ile-178.

It belongs to the PlsY family. In terms of assembly, probably interacts with PlsX.

It is found in the cell inner membrane. It catalyses the reaction an acyl phosphate + sn-glycerol 3-phosphate = a 1-acyl-sn-glycero-3-phosphate + phosphate. The protein operates within lipid metabolism; phospholipid metabolism. Catalyzes the transfer of an acyl group from acyl-phosphate (acyl-PO(4)) to glycerol-3-phosphate (G3P) to form lysophosphatidic acid (LPA). This enzyme utilizes acyl-phosphate as fatty acyl donor, but not acyl-CoA or acyl-ACP. This Cupriavidus metallidurans (strain ATCC 43123 / DSM 2839 / NBRC 102507 / CH34) (Ralstonia metallidurans) protein is Glycerol-3-phosphate acyltransferase.